A 430-amino-acid chain; its full sequence is Rosmarinate synthase (430 aa).

His-152 acts as the Proton acceptor in catalysis. The interval Thr-178–Glu-210 is disordered. Asp-377 serves as the catalytic Proton acceptor.

Belongs to the plant acyltransferase family.

The enzyme catalyses (2R)-3-(3,4-dihydroxyphenyl)lactate + (E)-caffeoyl-CoA = (R)-rosmarinate + CoA. Its function is as follows. Involved in the biosynthesis of rosmarinic acid, a compound with antiviral, antimicrobial and anti-inflammatory activities. Can use 4-coumaroyl- and caffeoyl-CoA as hydroxycinnamoyl donors and 4-Hydroxyphenyllactate and 3.4-Dihydroxyphenyllactate, but not shikimate or quinate, as hydroxycinnamoyl acceptors. Can also putatively catalyze amide formation with D-amino acids as acceptors. The polypeptide is Rosmarinate synthase (RAS) (Plectranthus scutellarioides (Coleus)).